A 149-amino-acid chain; its full sequence is D-aminoacyl-tRNA deacylase (149 aa).

Residues 138–139 carry the Gly-cisPro motif, important for rejection of L-amino acids motif; the sequence is GP.

The protein belongs to the DTD family. In terms of assembly, homodimer.

It is found in the cytoplasm. The enzyme catalyses glycyl-tRNA(Ala) + H2O = tRNA(Ala) + glycine + H(+). The catalysed reaction is a D-aminoacyl-tRNA + H2O = a tRNA + a D-alpha-amino acid + H(+). Its function is as follows. An aminoacyl-tRNA editing enzyme that deacylates mischarged D-aminoacyl-tRNAs. Also deacylates mischarged glycyl-tRNA(Ala), protecting cells against glycine mischarging by AlaRS. Acts via tRNA-based rather than protein-based catalysis; rejects L-amino acids rather than detecting D-amino acids in the active site. By recycling D-aminoacyl-tRNA to D-amino acids and free tRNA molecules, this enzyme counteracts the toxicity associated with the formation of D-aminoacyl-tRNA entities in vivo and helps enforce protein L-homochirality. In Chlorobaculum parvum (strain DSM 263 / NCIMB 8327) (Chlorobium vibrioforme subsp. thiosulfatophilum), this protein is D-aminoacyl-tRNA deacylase.